Here is a 352-residue protein sequence, read N- to C-terminus: UDP-N-acetylglucosamine--N-acetylmuramyl-(pentapeptide) pyrophosphoryl-undecaprenol N-acetylglucosamine transferase (352 aa).

Residues Ser195 and Gln287 each contribute to the UDP-N-acetyl-alpha-D-glucosamine site.

It belongs to the glycosyltransferase 28 family. MurG subfamily.

It localises to the cell membrane. It catalyses the reaction Mur2Ac(oyl-L-Ala-gamma-D-Glu-L-Lys-D-Ala-D-Ala)-di-trans,octa-cis-undecaprenyl diphosphate + UDP-N-acetyl-alpha-D-glucosamine = beta-D-GlcNAc-(1-&gt;4)-Mur2Ac(oyl-L-Ala-gamma-D-Glu-L-Lys-D-Ala-D-Ala)-di-trans,octa-cis-undecaprenyl diphosphate + UDP + H(+). Its pathway is cell wall biogenesis; peptidoglycan biosynthesis. Functionally, cell wall formation. Catalyzes the transfer of a GlcNAc subunit on undecaprenyl-pyrophosphoryl-MurNAc-pentapeptide (lipid intermediate I) to form undecaprenyl-pyrophosphoryl-MurNAc-(pentapeptide)GlcNAc (lipid intermediate II). The sequence is that of UDP-N-acetylglucosamine--N-acetylmuramyl-(pentapeptide) pyrophosphoryl-undecaprenol N-acetylglucosamine transferase from Streptococcus pneumoniae serotype 19F (strain G54).